The primary structure comprises 221 residues: PKHD-type hydroxylase PMT9312_1262 (221 aa).

A Fe2OG dioxygenase domain is found at 80–174 (IIHGIMFTKS…RLVCVGWIES (95 aa)). Residues His98, Asp100, and His155 each contribute to the Fe cation site. Arg165 is a binding site for 2-oxoglutarate.

Fe(2+) is required as a cofactor. Requires L-ascorbate as cofactor.

This is PKHD-type hydroxylase PMT9312_1262 from Prochlorococcus marinus (strain MIT 9312).